A 169-amino-acid polypeptide reads, in one-letter code: Peptide deformylase (169 aa).

Fe cation-binding residues include C91 and H133. The active site involves E134. H137 is a Fe cation binding site.

This sequence belongs to the polypeptide deformylase family. Fe(2+) serves as cofactor.

It catalyses the reaction N-terminal N-formyl-L-methionyl-[peptide] + H2O = N-terminal L-methionyl-[peptide] + formate. Its function is as follows. Removes the formyl group from the N-terminal Met of newly synthesized proteins. Requires at least a dipeptide for an efficient rate of reaction. N-terminal L-methionine is a prerequisite for activity but the enzyme has broad specificity at other positions. This Hydrogenovibrio crunogenus (strain DSM 25203 / XCL-2) (Thiomicrospira crunogena) protein is Peptide deformylase.